Consider the following 41-residue polypeptide: uncharacterized protein (41 aa).

This is an uncharacterized protein from Dictyostelium discoideum (Social amoeba).